A 288-amino-acid polypeptide reads, in one-letter code: ATP synthase gamma chain (288 aa).

This sequence belongs to the ATPase gamma chain family. F-type ATPases have 2 components, CF(1) - the catalytic core - and CF(0) - the membrane proton channel. CF(1) has five subunits: alpha(3), beta(3), gamma(1), delta(1), epsilon(1). CF(0) has three main subunits: a, b and c.

Its subcellular location is the cell membrane. Functionally, produces ATP from ADP in the presence of a proton gradient across the membrane. The gamma chain is believed to be important in regulating ATPase activity and the flow of protons through the CF(0) complex. This is ATP synthase gamma chain from Bacillus pumilus (strain SAFR-032).